Reading from the N-terminus, the 476-residue chain is Cysteine--tRNA ligase (476 aa).

Cys36 provides a ligand contact to Zn(2+). The short motif at 38-48 (PTVYDYAHIGN) is the 'HIGH' region element. Zn(2+) contacts are provided by Cys221, His246, and Glu250. The short motif at 278–282 (KMSKS) is the 'KMSKS' region element. Lys281 serves as a coordination point for ATP.

It belongs to the class-I aminoacyl-tRNA synthetase family. As to quaternary structure, monomer. It depends on Zn(2+) as a cofactor.

It is found in the cytoplasm. It carries out the reaction tRNA(Cys) + L-cysteine + ATP = L-cysteinyl-tRNA(Cys) + AMP + diphosphate. This Chlamydia felis (strain Fe/C-56) (Chlamydophila felis) protein is Cysteine--tRNA ligase.